The sequence spans 388 residues: Protein RecA (388 aa).

79-86 (GPESSGKT) contributes to the ATP binding site. The tract at residues 347–372 (IDGEEVSEQDTENKKDEPKKEEAVNE) is disordered. The span at 357 to 369 (TENKKDEPKKEEA) shows a compositional bias: basic and acidic residues.

The protein belongs to the RecA family.

It localises to the cytoplasm. Its function is as follows. Can catalyze the hydrolysis of ATP in the presence of single-stranded DNA, the ATP-dependent uptake of single-stranded DNA by duplex DNA, and the ATP-dependent hybridization of homologous single-stranded DNAs. It interacts with LexA causing its activation and leading to its autocatalytic cleavage. The chain is Protein RecA from Streptococcus pneumoniae (strain CGSP14).